Consider the following 575-residue polypeptide: Proline--tRNA ligase (575 aa).

The protein belongs to the class-II aminoacyl-tRNA synthetase family. ProS type 1 subfamily. Homodimer.

It localises to the cytoplasm. It catalyses the reaction tRNA(Pro) + L-proline + ATP = L-prolyl-tRNA(Pro) + AMP + diphosphate. In terms of biological role, catalyzes the attachment of proline to tRNA(Pro) in a two-step reaction: proline is first activated by ATP to form Pro-AMP and then transferred to the acceptor end of tRNA(Pro). As ProRS can inadvertently accommodate and process non-cognate amino acids such as alanine and cysteine, to avoid such errors it has two additional distinct editing activities against alanine. One activity is designated as 'pretransfer' editing and involves the tRNA(Pro)-independent hydrolysis of activated Ala-AMP. The other activity is designated 'posttransfer' editing and involves deacylation of mischarged Ala-tRNA(Pro). The misacylated Cys-tRNA(Pro) is not edited by ProRS. The chain is Proline--tRNA ligase from Solidesulfovibrio magneticus (strain ATCC 700980 / DSM 13731 / RS-1) (Desulfovibrio magneticus).